The following is a 431-amino-acid chain: Cyclic 2,3-diphosphoglycerate synthetase (431 aa).

It belongs to the cyclic 2,3-diphosphoglycerate synthetase family.

It localises to the cytoplasm. It catalyses the reaction (2R)-2,3-bisphosphoglycerate + ATP + H(+) = cyclic (2R)-2,3-bisphosphoglycerate + ADP + phosphate. In terms of biological role, catalyzes the formation of cyclic 2,3-diphosphoglycerate (cDPG) by formation of an intramolecular phosphoanhydride bond at the expense of ATP. The chain is Cyclic 2,3-diphosphoglycerate synthetase from Pyrococcus furiosus (strain ATCC 43587 / DSM 3638 / JCM 8422 / Vc1).